The following is a 383-amino-acid chain: Succinyl-diaminopimelate desuccinylase (383 aa).

His74 is a Zn(2+) binding site. Asp76 is a catalytic residue. Asp107 is a Zn(2+) binding site. The Proton acceptor role is filled by Glu141. 3 residues coordinate Zn(2+): Glu142, Glu170, and His356.

It belongs to the peptidase M20A family. DapE subfamily. As to quaternary structure, homodimer. Requires Zn(2+) as cofactor. Co(2+) serves as cofactor.

The catalysed reaction is N-succinyl-(2S,6S)-2,6-diaminopimelate + H2O = (2S,6S)-2,6-diaminopimelate + succinate. The protein operates within amino-acid biosynthesis; L-lysine biosynthesis via DAP pathway; LL-2,6-diaminopimelate from (S)-tetrahydrodipicolinate (succinylase route): step 3/3. In terms of biological role, catalyzes the hydrolysis of N-succinyl-L,L-diaminopimelic acid (SDAP), forming succinate and LL-2,6-diaminopimelate (DAP), an intermediate involved in the bacterial biosynthesis of lysine and meso-diaminopimelic acid, an essential component of bacterial cell walls. The sequence is that of Succinyl-diaminopimelate desuccinylase from Cupriavidus pinatubonensis (strain JMP 134 / LMG 1197) (Cupriavidus necator (strain JMP 134)).